The sequence spans 224 residues: UPF0173 metal-dependent hydrolase TTHA1283 (224 aa).

The protein belongs to the UPF0173 family.

The sequence is that of UPF0173 metal-dependent hydrolase TTHA1283 from Thermus thermophilus (strain ATCC 27634 / DSM 579 / HB8).